The following is a 303-amino-acid chain: ADP-ribosyl cyclase/cyclic ADP-ribose hydrolase 1 (303 aa).

The Cytoplasmic portion of the chain corresponds to 1–21 (MANYEFSQVSEDRPGCRLTRK). A helical; Signal-anchor for type II membrane protein membrane pass occupies residues 22 to 44 (AQIGLGVGLLLLVALVVVVVIVL). The Extracellular portion of the chain corresponds to 45 to 303 (WPRSPLVWKG…PEHPSCRLNV (259 aa)). 3 cysteine pairs are disulfide-bonded: Cys69–Cys85, Cys102–Cys183, and Cys163–Cys176. Residue Asn103 is glycosylated (N-linked (GlcNAc...) asparagine). Cys122 is an active-site residue. N-linked (GlcNAc...) asparagine glycosylation occurs at Asn123. Cys204 is an active-site residue. 2 N-linked (GlcNAc...) asparagine glycosylation sites follow: Asn212 and Asn222. 2 disulfides stabilise this stretch: Cys257–Cys278 and Cys290–Cys299.

It belongs to the ADP-ribosyl cyclase family. As to quaternary structure, homodimer. In terms of tissue distribution, spleen, liver, heart, thymus, thyroid gland, ileum, colon, cerebellum, salivary gland, adrenal gland, jejunum, islets of Langerhans and osteoclasts.

Its subcellular location is the cell membrane. The catalysed reaction is NAD(+) = cyclic ADP-beta-D-ribose + nicotinamide + H(+). The enzyme catalyses nicotinate + NADP(+) = nicotinate-adenine dinucleotide phosphate + nicotinamide. It catalyses the reaction NAD(+) + H2O = ADP-D-ribose + nicotinamide + H(+). With respect to regulation, both NAADP and cADPR synthesis are inhibited by nicotinic acid. Functionally, synthesizes the second messengers cyclic ADP-ribose and nicotinate-adenine dinucleotide phosphate, the former a second messenger for glucose-induced insulin secretion, the latter a Ca(2+) mobilizer. Also has cADPR hydrolase activity. In terms of biological role, regulates osteoclastic bone resorption, probably via production of cyclic ADP-ribose and triggering of a cytosolic calcium ion signal through ryanodine receptor activation. This is ADP-ribosyl cyclase/cyclic ADP-ribose hydrolase 1 (Cd38) from Rattus norvegicus (Rat).